A 234-amino-acid polypeptide reads, in one-letter code: Sugar fermentation stimulation protein homolog (234 aa).

The protein belongs to the SfsA family.

The chain is Sugar fermentation stimulation protein homolog from Pseudoalteromonas atlantica (strain T6c / ATCC BAA-1087).